We begin with the raw amino-acid sequence, 201 residues long: Imidazoleglycerol-phosphate dehydratase (201 aa).

It belongs to the imidazoleglycerol-phosphate dehydratase family.

It is found in the cytoplasm. It carries out the reaction D-erythro-1-(imidazol-4-yl)glycerol 3-phosphate = 3-(imidazol-4-yl)-2-oxopropyl phosphate + H2O. It functions in the pathway amino-acid biosynthesis; L-histidine biosynthesis; L-histidine from 5-phospho-alpha-D-ribose 1-diphosphate: step 6/9. The sequence is that of Imidazoleglycerol-phosphate dehydratase from Methanopyrus kandleri (strain AV19 / DSM 6324 / JCM 9639 / NBRC 100938).